Consider the following 219-residue polypeptide: N-(5'-phosphoribosyl)anthranilate isomerase (219 aa).

Belongs to the TrpF family.

It carries out the reaction N-(5-phospho-beta-D-ribosyl)anthranilate = 1-(2-carboxyphenylamino)-1-deoxy-D-ribulose 5-phosphate. Its pathway is amino-acid biosynthesis; L-tryptophan biosynthesis; L-tryptophan from chorismate: step 3/5. The chain is N-(5'-phosphoribosyl)anthranilate isomerase from Bradyrhizobium sp. (strain ORS 278).